A 556-amino-acid polypeptide reads, in one-letter code: Arginine--tRNA ligase (556 aa).

Positions 133-143 (ANPTGPIHIGH) match the 'HIGH' region motif.

This sequence belongs to the class-I aminoacyl-tRNA synthetase family. Monomer.

Its subcellular location is the cytoplasm. The enzyme catalyses tRNA(Arg) + L-arginine + ATP = L-arginyl-tRNA(Arg) + AMP + diphosphate. The sequence is that of Arginine--tRNA ligase from Dehalococcoides mccartyi (strain CBDB1).